The sequence spans 287 residues: 4-diphosphocytidyl-2-C-methyl-D-erythritol kinase (287 aa).

Residue Lys11 is part of the active site. An ATP-binding site is contributed by 93–103 (PFGAGLGGGSS). Asp135 is a catalytic residue.

It belongs to the GHMP kinase family. IspE subfamily.

The catalysed reaction is 4-CDP-2-C-methyl-D-erythritol + ATP = 4-CDP-2-C-methyl-D-erythritol 2-phosphate + ADP + H(+). Its pathway is isoprenoid biosynthesis; isopentenyl diphosphate biosynthesis via DXP pathway; isopentenyl diphosphate from 1-deoxy-D-xylulose 5-phosphate: step 3/6. In terms of biological role, catalyzes the phosphorylation of the position 2 hydroxy group of 4-diphosphocytidyl-2C-methyl-D-erythritol. The polypeptide is 4-diphosphocytidyl-2-C-methyl-D-erythritol kinase (Chlorobium luteolum (strain DSM 273 / BCRC 81028 / 2530) (Pelodictyon luteolum)).